A 435-amino-acid polypeptide reads, in one-letter code: Tubulin-like protein TubZ (435 aa).

Residues 25–26 (MG), 124–126 (GTG), asparagine 185, and asparagine 209 contribute to the GTP site. The tract at residues 403–435 (QEEKPKKKKLNFGAEPEAEVADDSQPTKKKLSF) is disordered.

Belongs to the FtsZ family. TubZ subfamily. As to quaternary structure, polymerizes to form two-stranded filaments and bundles at higher concentration in the presence of GTP. Binds to the TubR-tubC protein DNA complex.

It is found in the cytoplasm. The catalysed reaction is GTP + H2O = GDP + phosphate + H(+). With respect to regulation, GTPase inhibited by GTP-gamma-S, which also stabilizes filaments. A tubulin-like, filament forming GTPase; the motor component of the type III plasmid partition system which ensures correct segregation of the pXO1 plasmid. Essential for plasmid replication. The filaments seed from a DNA centromere-like site (tubC)-TubR complex which extends to surround the TubZ filaments. Highly dynamic filaments grow at the plus end and depolymerize at the minus end, a process called treadmilling. TubR-tubC complexes track the depolymerizing minus end of the filament, probably pulling plasmid within the cell. Has a high GTPase activity; in the presence of GTP assembles into dynamic filaments which bind almost exclusively GDP. Filament formation is cooperative, requiring a critical concentration. Formation occurs very quickly and is followed by disassembly as GTP is consumed. Small amounts of GTP-gamma-S stabilize filaments. Has high GTP and dGTPase activity, 6-fold lower ATPase activity. Forms filaments in the presence of ATP that also disassemble. Weakly binds DNA in a GTP-dependent, non-sequence-specific manner; GTP hydrolysis is not required for DNA-binding. This chain is Tubulin-like protein TubZ, found in Bacillus anthracis.